A 509-amino-acid chain; its full sequence is MDFGSFLLYALGVLASLALYFVRWNFGYWKRRGIPHEEPHLVMGNVKGLRSKYHIGEIIADYYRKFKGSDPLPGIFLGHKPAAVVLDKELRKRVLIKDFSNFANRGLYYNEKDDPLTGHLVMVEGEKWRSLRTKLSPTFTAGKMKYMYNTVLEVGQRLLEVMYEKLEVSSELDMRDILARFNTDVIGSVAFGIECNSLRNPHDRFLAMGRKSIEVPRHNALIMAFIDSFPELSRKLGMRVLPEDVHQFFMSSIKETVDYREKNNIRRNDFLDLVLDLKNNPESISKLGGLTFNELAAQVFVFFLGGFETSSSTMGFALYELAQNQQLQDRLREEVNEVFDQFKEDNISYDALMNIPYLDQVLNETLRKYPVGVGSALTRQTLNDYVVPHNPKYVLPKGTLVFIPVLGIHYDPELYPNPEEFDPERFSPEMVKQRDSVDWLGFGDGPRNCIGMRFGKMQSRLGLALVIRHFRFTVCSRTDIPMQINPESLAWTPKNNLYLNVQAIRKKIK.

C449 lines the heme pocket.

This sequence belongs to the cytochrome P450 family. It depends on heme as a cofactor.

It is found in the endoplasmic reticulum membrane. The protein localises to the microsome membrane. It carries out the reaction an organic molecule + reduced [NADPH--hemoprotein reductase] + O2 = an alcohol + oxidized [NADPH--hemoprotein reductase] + H2O + H(+). Involved in the metabolism of insect hormones and in the breakdown of synthetic insecticides. The protein is Cytochrome P450 6A1 (CYP6A1) of Musca domestica (House fly).